A 190-amino-acid polypeptide reads, in one-letter code: Succinate dehydrogenase assembly factor 2, mitochondrial (190 aa).

Belongs to the SDHAF2 family. In terms of assembly, interacts with the flavoprotein subunit within the SDH catalytic dimer.

It localises to the mitochondrion matrix. Plays an essential role in the assembly of succinate dehydrogenase (SDH), an enzyme complex (also referred to as respiratory complex II) that is a component of both the tricarboxylic acid (TCA) cycle and the mitochondrial electron transport chain, and which couples the oxidation of succinate to fumarate with the reduction of ubiquinone (coenzyme Q) to ubiquinol. Required for flavinylation (covalent attachment of FAD) of the flavoprotein subunit of the SDH catalytic dimer. The polypeptide is Succinate dehydrogenase assembly factor 2, mitochondrial (Komagataella phaffii (strain GS115 / ATCC 20864) (Yeast)).